Reading from the N-terminus, the 283-residue chain is RNase adapter protein RapZ (283 aa).

8–15 (GRSGSGKS) serves as a coordination point for ATP. 56 to 59 (DVRN) contributes to the GTP binding site. The tract at residues 266–283 (RARGKNVQSRHRTLEKRK) is RNA-binding.

Belongs to the RapZ-like family. RapZ subfamily. Homotrimer.

Its function is as follows. Modulates the synthesis of GlmS, by affecting the processing and stability of the regulatory small RNA GlmZ. When glucosamine-6-phosphate (GlcN6P) concentrations are high in the cell, RapZ binds GlmZ and targets it to cleavage by RNase E. Consequently, GlmZ is inactivated and unable to activate GlmS synthesis. Under low GlcN6P concentrations, RapZ is sequestered and inactivated by an other regulatory small RNA, GlmY, preventing GlmZ degradation and leading to synthesis of GlmS. The sequence is that of RNase adapter protein RapZ from Yersinia enterocolitica serotype O:8 / biotype 1B (strain NCTC 13174 / 8081).